Here is a 206-residue protein sequence, read N- to C-terminus: Holliday junction branch migration complex subunit RuvA (206 aa).

The segment at 1–64 (MIGRLHGIII…EDAQLLYGFN (64 aa)) is domain I. The tract at residues 65–143 (TRQERTLFRE…GWISHDLFTP (79 aa)) is domain II. The flexible linker stretch occupies residues 144–157 (YTDAAPVDHEPSLA). Residues 158 to 206 (PADTVESEAVAALLALGYKPQQASLVVSKVIKPEMTVENVIREALRSML) form a domain III region.

Belongs to the RuvA family. As to quaternary structure, homotetramer. Forms an RuvA(8)-RuvB(12)-Holliday junction (HJ) complex. HJ DNA is sandwiched between 2 RuvA tetramers; dsDNA enters through RuvA and exits via RuvB. An RuvB hexamer assembles on each DNA strand where it exits the tetramer. Each RuvB hexamer is contacted by two RuvA subunits (via domain III) on 2 adjacent RuvB subunits; this complex drives branch migration. In the full resolvosome a probable DNA-RuvA(4)-RuvB(12)-RuvC(2) complex forms which resolves the HJ.

It localises to the cytoplasm. In terms of biological role, the RuvA-RuvB-RuvC complex processes Holliday junction (HJ) DNA during genetic recombination and DNA repair, while the RuvA-RuvB complex plays an important role in the rescue of blocked DNA replication forks via replication fork reversal (RFR). RuvA specifically binds to HJ cruciform DNA, conferring on it an open structure. The RuvB hexamer acts as an ATP-dependent pump, pulling dsDNA into and through the RuvAB complex. HJ branch migration allows RuvC to scan DNA until it finds its consensus sequence, where it cleaves and resolves the cruciform DNA. The polypeptide is Holliday junction branch migration complex subunit RuvA (Tolumonas auensis (strain DSM 9187 / NBRC 110442 / TA 4)).